Here is a 316-residue protein sequence, read N- to C-terminus: Annexin A13 (316 aa).

Glycine 2 carries N-myristoyl glycine lipidation. Annexin repeat units follow at residues phenylalanine 14–aspartate 85, arginine 86–glutamine 157, aspartate 169–arginine 241, and aspartate 245–histidine 316.

It belongs to the annexin family. In terms of assembly, monomer and homodimer. Detected in epithelial cells in colon and jejunum (at protein level). Detected in epithelial cells in jejunum.

It localises to the apical cell membrane. The protein resides in the cell membrane. It is found in the cytoplasmic vesicle. In terms of biological role, binds to membranes enriched in phosphatidylserine or phosphatidylglycerol in a calcium-dependent manner. Half-maximal membrane binding requires about 60 uM calcium. Does not bind to membranes that lack phospholipids with an acidic headgroup. Binds to membranes enriched in phosphatidylserine or phosphatidylglycerol in a calcium-dependent manner, but requires higher calcium levels for membrane binding than isoform A. Half-maximal membrane binding requires about 320 uM calcium. The chain is Annexin A13 (ANXA13) from Homo sapiens (Human).